The following is a 438-amino-acid chain: uncharacterized protein (438 aa).

This is an uncharacterized protein from Acanthamoeba polyphaga mimivirus (APMV).